The chain runs to 240 residues: Adenosylcobinamide-GDP ribazoletransferase (240 aa).

5 consecutive transmembrane segments (helical) span residues 31-51 (LLYYPLVGLLFGLLLWLASHL), 62-81 (ALLLTLWVLLSGALHLDGLA), 109-129 (IAVVTLVLVLLLKFCALWVLV), 133-153 (IGAQLLLAPLIGRAAMLGLFL), and 179-199 (VLLVCVLFCLFLGGWSVLLAL).

This sequence belongs to the CobS family. Requires Mg(2+) as cofactor.

It is found in the cell inner membrane. It catalyses the reaction alpha-ribazole + adenosylcob(III)inamide-GDP = adenosylcob(III)alamin + GMP + H(+). The enzyme catalyses alpha-ribazole 5'-phosphate + adenosylcob(III)inamide-GDP = adenosylcob(III)alamin 5'-phosphate + GMP + H(+). It participates in cofactor biosynthesis; adenosylcobalamin biosynthesis; adenosylcobalamin from cob(II)yrinate a,c-diamide: step 7/7. Its function is as follows. Joins adenosylcobinamide-GDP and alpha-ribazole to generate adenosylcobalamin (Ado-cobalamin). Also synthesizes adenosylcobalamin 5'-phosphate from adenosylcobinamide-GDP and alpha-ribazole 5'-phosphate. This Pseudomonas putida (strain ATCC 700007 / DSM 6899 / JCM 31910 / BCRC 17059 / LMG 24140 / F1) protein is Adenosylcobinamide-GDP ribazoletransferase.